Here is a 438-residue protein sequence, read N- to C-terminus: Nudix hydrolase 19, chloroplastic (438 aa).

The transit peptide at 1–36 (MLALFLSSSSYPTLSFLSRSVTLNLARTTTLSALTM) directs the protein to the chloroplast. Zn(2+) contacts are provided by Cys-212, Cys-215, Cys-230, and Cys-235. Substrate is bound by residues Tyr-240, 276–278 (AGF), Glu-292, Glu-296, and Glu-342. The Nudix hydrolase domain occupies 241 to 371 (PRVDPVVIML…EYRKAQRTAA (131 aa)). Mg(2+) is bound by residues Ala-276, Glu-292, Glu-296, and Glu-342. The Nudix box signature appears at 277-298 (GFIEPGESLEEAVRRETWEETG). The Microbody targeting signal signature appears at 422–424 (PDD).

It belongs to the Nudix hydrolase family. NudC subfamily. It depends on Mg(2+) as a cofactor. Requires Zn(2+) as cofactor. As to expression, expressed in roots, leaves, stems and inflorescences.

Its subcellular location is the plastid. The protein localises to the chloroplast. It catalyses the reaction a 5'-end NAD(+)-phospho-ribonucleoside in mRNA + H2O = a 5'-end phospho-adenosine-phospho-ribonucleoside in mRNA + beta-nicotinamide D-ribonucleotide + 2 H(+). The catalysed reaction is NAD(+) + H2O = beta-nicotinamide D-ribonucleotide + AMP + 2 H(+). The enzyme catalyses NADH + H2O = reduced beta-nicotinamide D-ribonucleotide + AMP + 2 H(+). Functionally, mRNA decapping enzyme that specifically removes the nicotinamide adenine dinucleotide (NAD) cap from a subset of mRNAs by hydrolyzing the diphosphate linkage to produce nicotinamide mononucleotide (NMN) and 5' monophosphate mRNA. The NAD-cap is present at the 5'-end of some RNAs; in contrast to the canonical N7 methylguanosine (m7G) cap, the NAD cap promotes mRNA decay. Mediates the hydrolysis of some nucleoside diphosphate derivatives. Has a high affinity for NADPH compared with that for NADH. The sequence is that of Nudix hydrolase 19, chloroplastic (NUDT19) from Arabidopsis thaliana (Mouse-ear cress).